Here is a 263-residue protein sequence, read N- to C-terminus: Hydroxyacylglutathione hydrolase (263 aa).

Zn(2+) is bound by residues His56, His58, Asp60, His61, His115, Asp135, and His175.

It belongs to the metallo-beta-lactamase superfamily. Glyoxalase II family. In terms of assembly, monomer. Zn(2+) is required as a cofactor.

It catalyses the reaction an S-(2-hydroxyacyl)glutathione + H2O = a 2-hydroxy carboxylate + glutathione + H(+). Its pathway is secondary metabolite metabolism; methylglyoxal degradation; (R)-lactate from methylglyoxal: step 2/2. Functionally, thiolesterase that catalyzes the hydrolysis of S-D-lactoyl-glutathione to form glutathione and D-lactic acid. In Nitrosococcus oceani (strain ATCC 19707 / BCRC 17464 / JCM 30415 / NCIMB 11848 / C-107), this protein is Hydroxyacylglutathione hydrolase.